The sequence spans 228 residues: Triosephosphate isomerase (228 aa).

11-13 (NFK) lines the substrate pocket. Catalysis depends on His95, which acts as the Electrophile. The Proton acceptor role is filled by Glu143. Residues Ile148, Gly183, and 204–205 (AS) contribute to the substrate site.

Belongs to the triosephosphate isomerase family. As to quaternary structure, homotetramer; dimer of dimers.

Its subcellular location is the cytoplasm. The enzyme catalyses D-glyceraldehyde 3-phosphate = dihydroxyacetone phosphate. It participates in carbohydrate biosynthesis; gluconeogenesis. The protein operates within carbohydrate degradation; glycolysis; D-glyceraldehyde 3-phosphate from glycerone phosphate: step 1/1. In terms of biological role, involved in the gluconeogenesis. Catalyzes stereospecifically the conversion of dihydroxyacetone phosphate (DHAP) to D-glyceraldehyde-3-phosphate (G3P). The protein is Triosephosphate isomerase of Pyrococcus horikoshii (strain ATCC 700860 / DSM 12428 / JCM 9974 / NBRC 100139 / OT-3).